The chain runs to 324 residues: Glyoxylate/hydroxypyruvate reductase B (324 aa).

Catalysis depends on residues R237 and E266. H285 serves as the catalytic Proton donor.

The protein belongs to the D-isomer specific 2-hydroxyacid dehydrogenase family. GhrB subfamily. As to quaternary structure, homodimer.

It localises to the cytoplasm. It carries out the reaction glycolate + NADP(+) = glyoxylate + NADPH + H(+). The catalysed reaction is (R)-glycerate + NAD(+) = 3-hydroxypyruvate + NADH + H(+). The enzyme catalyses (R)-glycerate + NADP(+) = 3-hydroxypyruvate + NADPH + H(+). Its function is as follows. Catalyzes the NADPH-dependent reduction of glyoxylate and hydroxypyruvate into glycolate and glycerate, respectively. This Shigella boydii serotype 18 (strain CDC 3083-94 / BS512) protein is Glyoxylate/hydroxypyruvate reductase B.